The primary structure comprises 369 residues: MASVQLRNVTKAWGDVVVSKDINLDIHDGEFVVFVGPSGCGKSTLLRMIAGLETITSGDLFIGETRMNDIPPAERGVGMVFQSYALYPHLSVAENMSFGLKLAGAKKEVMNQRVNQVAEVLQLAHLLERKPKALSGGQRQRVAIGRTLVAEPRVFLLDEPLSNLDAALRVQMRIEISRLHKRLGRTMIYVTHDQVEAMTLADKIVVLDAGRVAQVGKPLELYHYPADRFVAGFIGSPKMNFLPVKVTATAIEQVQVELPNRQQIWLPVESRGVQVGANMSLGIRPEHLLPSDIADVTLEGEVQVVEQLGHETQIHIQIPAIRQNLVYRQNDVVLVEEGATFAIGLPPERCHLFREDGSACRRLHQEPGV.

The ABC transporter domain maps to 4-234; the sequence is VQLRNVTKAW…PADRFVAGFI (231 aa). 36–43 lines the ATP pocket; sequence GPSGCGKS.

Belongs to the ABC transporter superfamily. Maltooligosaccharide importer (TC 3.A.1.1.1) family. The complex is composed of two ATP-binding proteins (MalK), two transmembrane proteins (MalG and MalK) and a solute-binding protein (MalE).

It localises to the cell inner membrane. The enzyme catalyses D-maltose(out) + ATP + H2O = D-maltose(in) + ADP + phosphate + H(+). In terms of biological role, part of the ABC transporter complex MalEFGK involved in maltose/maltodextrin import. Responsible for energy coupling to the transport system. In Salmonella choleraesuis (strain SC-B67), this protein is Maltose/maltodextrin import ATP-binding protein MalK.